The sequence spans 404 residues: ATP phosphoribosyltransferase regulatory subunit (404 aa).

This sequence belongs to the class-II aminoacyl-tRNA synthetase family. HisZ subfamily. In terms of assembly, heteromultimer composed of HisG and HisZ subunits.

The protein localises to the cytoplasm. It functions in the pathway amino-acid biosynthesis; L-histidine biosynthesis; L-histidine from 5-phospho-alpha-D-ribose 1-diphosphate: step 1/9. Required for the first step of histidine biosynthesis. May allow the feedback regulation of ATP phosphoribosyltransferase activity by histidine. The polypeptide is ATP phosphoribosyltransferase regulatory subunit (Picosynechococcus sp. (strain ATCC 27264 / PCC 7002 / PR-6) (Agmenellum quadruplicatum)).